We begin with the raw amino-acid sequence, 36 residues long: Cecropin-D (36 aa).

Lysine amide is present on Lys-36.

The protein belongs to the cecropin family.

Its subcellular location is the secreted. Cecropins have lytic and antibacterial activity against several Gram-positive and Gram-negative bacteria. The polypeptide is Cecropin-D (Antheraea pernyi (Chinese oak silk moth)).